Here is a 796-residue protein sequence, read N- to C-terminus: MAWDMCNQDSVWTDIECAALVGEDQPLCPDLPELDLSELDVNDLDTDSFLGGLKWCSDQSEIISNQYNNEPSNIFEKIDEENEANLLAVLTETLDSLPVDEDGLPSFDALTDGDVTTENEASPSSMPDGTPPPQEAEEPSLLKKLLLAPANTQLSYNECSGLSTQNHANHNHRIRTNPAVVKTENSWSNKAKSICQQQKPQRRPCSELLKYLTTNDDPPHTKPTETRNSSRDKCTSKKKAHTQSQSQHLQAKPTSLSLPLTPESPNDPKGSPFENKTIERTLSVELSGTAGLTPPTTPPHKANQDNPFRASPKLKPPCKTVVPPPSKKTRYSESSGTHGNNSTKKGPEQSELYAQLSKTSALGGGHEERKARRPSLRLFGDHDYCQSINSKAEILINISQELHDSRQLDSKDAASDWQRQMCSSTDSDQCYLTETSEASRQVSPGSARKQLQDQEIRAELNKHFGHPSQAVFDDEADKTSELRDSDFSNEQFSKLPMFINSGLAMDGLFDDSEDESDKLNSPWDGTQSYSLFDVSPSCSSFNSPCRDSVSPPKSLFSQRPQRMRSRSRSFSQHRSCSRSPYSRSRSRSPGSRSSSRSCYYSESGHCRHRTHRNSPLCARSRSRSPYSRRPRYDSYEEYQHERLKREEYRREYEKRESERAKQRERQRQKAIEERRVIYVGKIRPDTTRTELRDRFEVFGEIEECTVNLRDDGDSYGFITYRYTCDAFAALENGYTLRRSNETDFELYFCGRKQFFKSNYADLDSNSDDFDPASTKSKYDSLDFDSLLKEAQRSLRR.

Lysine 77 carries the N6-acetyllysine modification. The segment at 98–138 (PVDEDGLPSFDALTDGDVTTENEASPSSMPDGTPPPQEAEE) is disordered. Over residues 114 to 127 (DVTTENEASPSSMP) the composition is skewed to polar residues. An LXXLL motif motif is present at residues 142–146 (LKKLL). Lysine 144 bears the N6-acetyllysine mark. Threonine 176 carries the post-translational modification Phosphothreonine; by AMPK. An N6-acetyllysine modification is found at lysine 182. A disordered region spans residues 211-274 (YLTTNDDPPH…PNDPKGSPFE (64 aa)). The span at 217–235 (DPPHTKPTETRNSSRDKCT) shows a compositional bias: basic and acidic residues. Polar residues predominate over residues 242 to 258 (TQSQSQHLQAKPTSLSL). Lysine 252, lysine 269, lysine 276, and lysine 319 each carry N6-acetyllysine. Residues 288–349 (GTAGLTPPTT…NNSTKKGPEQ (62 aa)) are disordered. Residues 291–337 (GLTPPTTPPHKANQDNPFRASPKLKPPCKTVVPPPSKKTRYSESSGT) form an interaction with PPARG region. Positions 332–344 (SESSGTHGNNSTK) are enriched in polar residues. 3 positions are modified to N6-acetyllysine: lysine 345, lysine 411, and lysine 449. The mediates interaction with RNF34 stretch occupies residues 348–796 (EQSELYAQLS…LKEAQRSLRR (449 aa)). The segment at 463–487 (HFGHPSQAVFDDEADKTSELRDSDF) is disordered. The segment covering 477 to 486 (DKTSELRDSD) has biased composition (basic and acidic residues). Serine 537 carries the phosphoserine; by AMPK modification. 2 disordered regions span residues 541–637 (FNSP…SYEE) and 648–667 (YRRE…ERQR). A compositionally biased stretch (low complexity) spans 568–603 (RSFSQHRSCSRSPYSRSRSRSPGSRSSSRSCYYSES). The segment covering 620 to 629 (SRSRSPYSRR) has biased composition (basic residues). Residues 675–751 (RVIYVGKIRP…TDFELYFCGR (77 aa)) form the RRM domain. 2 positions are modified to N6-acetyllysine: lysine 756 and lysine 777.

Homooligomer. Interacts with MYBBP1A; inhibits MYBBP1A transcriptional activation. Interacts with PRDM16, LPIN1 and PML. Interacts (via LXXLL motif) with RORA and RORC (via AF-2 motif); activates RORA and RORC transcriptional activation. Interacts with LRPPRC. Interacts with FOXO1. Interacts with NR5A2. Post-translationally, phosphorylation by AMPK in skeletal muscle increases activation of its own promoter. Phosphorylated by CLK2. Heavily acetylated by KAT2A/GCN5 under conditions of high nutrients, leading to inactivation of PPARGC1A. Deacetylated by SIRT1 in low nutrients/high NAD conditions, leading to its activation. In terms of processing, ubiquitinated. Ubiquitination by RNF34 induces proteasomal degradation.

It is found in the nucleus. Its subcellular location is the PML body. Transcriptional coactivator for steroid receptors and nuclear receptors. Greatly increases the transcriptional activity of PPARG and thyroid hormone receptor on the uncoupling protein promoter. Can regulate key mitochondrial genes that contribute to the program of adaptive thermogenesis. Plays an essential role in metabolic reprogramming in response to dietary availability through coordination of the expression of a wide array of genes involved in glucose and fatty acid metabolism. Acts as a key regulator of gluconeogenesis: stimulates hepatic gluconeogenesis by increasing the expression of gluconeogenic enzymes, and acting together with FOXO1 to promote the fasting gluconeogenic program. Induces the expression of PERM1 in the skeletal muscle in an ESRRA-dependent manner. Also involved in the integration of the circadian rhythms and energy metabolism. Required for oscillatory expression of clock genes, such as BMAL1 and NR1D1, through the coactivation of RORA and RORC, and metabolic genes, such as PDK4 and PEPCK. This chain is Peroxisome proliferator-activated receptor gamma coactivator 1-alpha (PPARGC1A), found in Sus scrofa (Pig).